The primary structure comprises 249 residues: Type III pantothenate kinase (249 aa).

6–13 (DIGNSRTK) serves as a coordination point for ATP. Substrate contacts are provided by residues Tyr-89 and 96–99 (GIDR). The active-site Proton acceptor is Asp-98. A K(+)-binding site is contributed by Asp-119. Thr-122 is an ATP binding site. Residue Thr-174 coordinates substrate.

This sequence belongs to the type III pantothenate kinase family. As to quaternary structure, homodimer. It depends on NH4(+) as a cofactor. Requires K(+) as cofactor.

It localises to the cytoplasm. The catalysed reaction is (R)-pantothenate + ATP = (R)-4'-phosphopantothenate + ADP + H(+). It functions in the pathway cofactor biosynthesis; coenzyme A biosynthesis; CoA from (R)-pantothenate: step 1/5. Its function is as follows. Catalyzes the phosphorylation of pantothenate (Pan), the first step in CoA biosynthesis. This chain is Type III pantothenate kinase, found in Colwellia psychrerythraea (strain 34H / ATCC BAA-681) (Vibrio psychroerythus).